The sequence spans 711 residues: Forkhead box protein P1 (711 aa).

Polar residues predominate over residues 1 to 19 (MMQESGSEAKSNGSTIQNG). Residues 1–41 (MMQESGSEAKSNGSTIQNGSSGGNHLLECGTLRDTRSNGEA) form a disordered region. A Phosphoserine modification is found at Ser115. Disordered regions lie at residues 273–292 (HTAE…TSTC) and 305–332 (MNPH…EHPH). The segment covering 305 to 317 (MNPHASTNGQLSV) has biased composition (polar residues). Over residues 320–332 (PKRESLSHEEHPH) the composition is skewed to basic and acidic residues. Residue Lys321 forms a Glycyl lysine isopeptide (Lys-Gly) (interchain with G-Cter in SUMO2) linkage. Residues 340-365 (GVCKWPGCEAVCDDFPAFLKHLNSEH) form a C2H2-type zinc finger. Positions 382–403 (VQQLELQLAKDKERLQAMMTHL) are leucine-zipper. Glycyl lysine isopeptide (Lys-Gly) (interchain with G-Cter in SUMO2) cross-links involve residues Lys406 and Lys411. A CTBP1-binding region spans residues 416 to 420 (PLNLV). Over residues 424–437 (TLSKSASEASPQSL) the composition is skewed to polar residues. The segment at 424-456 (TLSKSASEASPQSLPHTPTTPTAPLTPVTQGPS) is disordered. The segment covering 438 to 452 (PHTPTTPTAPLTPVT) has biased composition (low complexity). Lys476 participates in a covalent cross-link: Glycyl lysine isopeptide (Lys-Gly) (interchain with G-Cter in SUMO2). Residues 499 to 589 (RPPFTYASLI…PQKISGNPSL (91 aa)) constitute a DNA-binding region (fork-head). The interval 645–711 (EHTNSNESDS…EDEPVNEDME (67 aa)) is disordered. Positions 646-657 (HTNSNESDSSPG) are enriched in polar residues. Thr687 carries the phosphothreonine modification. Position 692 is a phosphoserine (Ser692). A compositionally biased stretch (acidic residues) spans 701–711 (YEDEPVNEDME).

Forms homodimers and heterodimers with FOXP2 and FOXP4. Dimerization is required for DNA-binding. Self-associates. Interacts with CTBP1. Interacts with NCOR2 and AR. Interacts with FOXP2. Interacts with TBR1. Interacts with AURKA; this interaction facilitates the phosphorylation of FOXP1, which suppresses the expression of FBXL7. Interacts with ZMYM2.

The protein localises to the nucleus. Its function is as follows. Transcriptional repressor. Can act with CTBP1 to synergistically repress transcription but CTPBP1 is not essential. Plays an important role in the specification and differentiation of lung epithelium. Acts cooperatively with FOXP4 to regulate lung secretory epithelial cell fate and regeneration by restricting the goblet cell lineage program; the function may involve regulation of AGR2. Essential transcriptional regulator of B-cell development. Involved in regulation of cardiac muscle cell proliferation. Involved in the columnar organization of spinal motor neurons. Promotes the formation of the lateral motor neuron column (LMC) and the preganglionic motor column (PGC) and is required for respective appropriate motor axon projections. The segment-appropriate generation of spinal cord motor columns requires cooperation with other Hox proteins. Can regulate PITX3 promoter activity; may promote midbrain identity in embryonic stem cell-derived dopamine neurons by regulating PITX3. Negatively regulates the differentiation of T follicular helper cells T(FH)s. Involved in maintenance of hair follicle stem cell quiescence; the function probably involves regulation of FGF18. Represses transcription of various pro-apoptotic genes and cooperates with NF-kappa B-signaling in promoting B-cell expansion by inhibition of caspase-dependent apoptosis. Binds to CSF1R promoter elements and is involved in regulation of monocyte differentiation and macrophage functions; repression of CSF1R in monocytes seems to involve NCOR2 as corepressor. Involved in endothelial cell proliferation, tube formation and migration indicative for a role in angiogenesis; the role in neovascularization seems to implicate suppression of SEMA5B. Can negatively regulate androgen receptor signaling. Acts as a transcriptional activator of the FBXL7 promoter; this activity is regulated by AURKA. The polypeptide is Forkhead box protein P1 (Foxp1) (Rattus norvegicus (Rat)).